A 590-amino-acid polypeptide reads, in one-letter code: Myo-inositol transporter 3C (590 aa).

At 1–63 (MSRTPSSLDK…GEDKVTPYLC (63 aa)) the chain is on the cytoplasmic side. The helical transmembrane segment at 64-86 (FLISASAIAGFLFGYDTGVVGVA) threads the bilayer. The Extracellular portion of the chain corresponds to 87–105 (LPLVGTDLGGSVLSSSQQE). A helical membrane pass occupies residues 106 to 126 (IITAGTTIGAIFGSAILGGWG). The Cytoplasmic portion of the chain corresponds to 127-132 (DRLGRK). The chain crosses the membrane as a helical span at residues 133–153 (VAILIADVFFTVGAVLIAASY). The Extracellular segment spans residues 154–162 (SVPQMIVGR). The helical transmembrane segment at 163-183 (IVLGVGVGGAAAIAPLFITET) threads the bilayer. At 184-192 (APTAVRGRC) the chain is on the cytoplasmic side. Residues 193–213 (IGVNAFFIPFGQVISEAIGAG) form a helical membrane-spanning segment. At 214–222 (VQDMKNGWR) the chain is on the extracellular side. The chain crosses the membrane as a helical span at residues 223-243 (LLFALGAVPSLFQLILFHYLP). Topologically, residues 244 to 325 (ESPRILILRG…TVSLIQMAGQ (82 aa)) are cytoplasmic. A helical transmembrane segment spans residues 326–346 (LSGFNTLLYYAGTLFSLLGLT). Over 347–349 (NPA) the chain is Extracellular. The helical transmembrane segment at 350-370 (LGGLIPAGTNAFFVLVGMTLV) threads the bilayer. The Cytoplasmic segment spans residues 371-376 (DKVGRR). Residues 377 to 397 (GLLMFGVPIMLAGLVWNIVAF) form a helical membrane-spanning segment. Over 398-417 (HYLCIPTGGLLDTSYKYDTK) the chain is Extracellular. The helical transmembrane segment at 418–438 (LVGIVIGGIVFFTTGFGLTYS) threads the bilayer. The Cytoplasmic segment spans residues 439-454 (HLAWYQSEFLALEVRS). Residues 455–475 (VGSGIATTANWVANLVVSVSY) form a helical membrane-spanning segment. Over 476–485 (LTELETLTPS) the chain is Extracellular. The chain crosses the membrane as a helical span at residues 486-506 (GTYGLYLGFSVVFFIFAVFCY). Topologically, residues 507–590 (PETKQLSIDE…NGAKRFPISR (84 aa)) are cytoplasmic.

The protein belongs to the major facilitator superfamily. Sugar transporter (TC 2.A.1.1) family.

It localises to the cell membrane. It catalyses the reaction myo-inositol(out) + H(+)(out) = myo-inositol(in) + H(+)(in). Its function is as follows. Major transporter for myo-inositol. Plays a role in the traversal of the host blood-brain barrier. This chain is Myo-inositol transporter 3C, found in Cryptococcus neoformans var. grubii serotype A (strain H99 / ATCC 208821 / CBS 10515 / FGSC 9487) (Filobasidiella neoformans var. grubii).